We begin with the raw amino-acid sequence, 254 residues long: ATP-dependent L-serine kinase SbnI (254 aa).

Glu20 is a catalytic residue. Ser33 contacts ADP. Ile57 serves as a coordination point for O-phospho-L-serine. ADP-binding residues include Asp58, Gly59, His61, and Arg62. Positions 59 and 61 each coordinate O-phospho-L-serine. O-phospho-L-serine contacts are provided by Trp98 and Arg229.

In terms of assembly, forms dimers and tetramers in solution. Predominantly forms dimers. Dimerization/oligomerization is not essential for kinase activity.

The enzyme catalyses L-serine + ATP = O-phospho-L-serine + ADP + H(+). It participates in siderophore biosynthesis. Its activity is regulated as follows. Binds heme and heme binding inhibits DNA binding. Free serine kinase that uses ATP to phosphorylate L-serine to yield O-phospho-L-serine and ADP. O-phospho-L-serine serves as a substrate for SbnA and is a precursor for staphyloferrin B biosynthesis. Is also a DNA-binding regulatory protein that senses heme to control gene expression for siderophore biosynthesis. Binds to DNA within the sbnC coding region and is required for expression of genes in the sbn operon from sbnD onward. This chain is ATP-dependent L-serine kinase SbnI, found in Staphylococcus aureus (strain NCTC 8325 / PS 47).